We begin with the raw amino-acid sequence, 78 residues long: Broad mercury transporter MerE (78 aa).

2 helical membrane-spanning segments follow: residues 19–39 (LWGA…AAVL) and 47–67 (FLGE…VLAV).

Its subcellular location is the cell inner membrane. Broad mercury transporter that mediates the transport of both CH(3)Hg(I) and Hg(II) across the membrane. In Shigella flexneri, this protein is Broad mercury transporter MerE.